A 171-amino-acid polypeptide reads, in one-letter code: Co-chaperone protein HscB homolog (171 aa).

Residues 2 to 74 form the J domain; it reads NHFELFGLPN…VTRAEYILSE (73 aa).

Belongs to the HscB family. As to quaternary structure, interacts with HscA and stimulates its ATPase activity.

Co-chaperone involved in the maturation of iron-sulfur cluster-containing proteins. Seems to help targeting proteins to be folded toward HscA. The protein is Co-chaperone protein HscB homolog of Aliivibrio salmonicida (strain LFI1238) (Vibrio salmonicida (strain LFI1238)).